Reading from the N-terminus, the 69-residue chain is Large ribosomal subunit protein uL29 (69 aa).

This sequence belongs to the universal ribosomal protein uL29 family.

The chain is Large ribosomal subunit protein uL29 from Synechococcus sp. (strain CC9902).